The sequence spans 555 residues: Dihydroxy-acid dehydratase (555 aa).

A [2Fe-2S] cluster-binding site is contributed by Cys-46. Asp-78 lines the Mg(2+) pocket. Residue Cys-119 participates in [2Fe-2S] cluster binding. Residues Asp-120 and Lys-121 each coordinate Mg(2+). Lys-121 is modified (N6-carboxylysine). Cys-191 contacts [2Fe-2S] cluster. Residue Glu-442 coordinates Mg(2+). Ser-468 functions as the Proton acceptor in the catalytic mechanism.

It belongs to the IlvD/Edd family. In terms of assembly, homodimer. [2Fe-2S] cluster serves as cofactor. The cofactor is Mg(2+).

The enzyme catalyses (2R)-2,3-dihydroxy-3-methylbutanoate = 3-methyl-2-oxobutanoate + H2O. It catalyses the reaction (2R,3R)-2,3-dihydroxy-3-methylpentanoate = (S)-3-methyl-2-oxopentanoate + H2O. It functions in the pathway amino-acid biosynthesis; L-isoleucine biosynthesis; L-isoleucine from 2-oxobutanoate: step 3/4. It participates in amino-acid biosynthesis; L-valine biosynthesis; L-valine from pyruvate: step 3/4. In terms of biological role, functions in the biosynthesis of branched-chain amino acids. Catalyzes the dehydration of (2R,3R)-2,3-dihydroxy-3-methylpentanoate (2,3-dihydroxy-3-methylvalerate) into 2-oxo-3-methylpentanoate (2-oxo-3-methylvalerate) and of (2R)-2,3-dihydroxy-3-methylbutanoate (2,3-dihydroxyisovalerate) into 2-oxo-3-methylbutanoate (2-oxoisovalerate), the penultimate precursor to L-isoleucine and L-valine, respectively. The sequence is that of Dihydroxy-acid dehydratase from Thermus thermophilus (strain ATCC BAA-163 / DSM 7039 / HB27).